A 493-amino-acid polypeptide reads, in one-letter code: MNKQASQPRAIYYVVALQIWEYFSFYGMRALLILYLTNQLKYDDNHAYELFSAYCSLVYVTPILGGYLADKVLGNRMAVMLGAFLMAIGHLVLGASEIAPTFLYLSLAIIVCGYGLFKSNISCLLGELYQPEDPRRDGGFSLLYAAGNIGSIVAPIACGYVQEEYSWAMGFALAAIGMLAGLVIFLCGNRHFTHTTGVNKAVLCARNYLLPNWGWLLILLVAAPLLITVLFWKEWSVYALIVATAISLVVLAKIYRQAQTAKQRKELGLIVTLTLFSMLFWAFAQQGGSSISLYIDRFVNRDILGYSVPTAMFQSVNAFAVMLCGVVLAWLVKESVSGNRTVRIWGKFALGLGLMSAGFCILTLSARWSAAYGHSSMPLMVLGLAVMGFAELFIDPVAMSQITRIDIPGVTGVLTGIYMLLSGAIANYLAGVIADQTSQSAFDASGAVNYAINAYVDVFEQITWGALACVGVVLLIWLYQSFKFKSRALAVES.

The next 13 membrane-spanning stretches (helical) occupy residues 14–34 (VVAL…LLIL), 49–69 (ELFS…GYLA), 91–111 (LVLG…AIIV), 138–158 (GGFS…PIAC), 167–187 (WAMG…IFLC), 212–232 (NWGW…VLFW), 235–255 (WSVY…AKIY), 267–287 (LGLI…AQQG), 312–332 (MFQS…AWLV), 344–364 (IWGK…ILTL), 379–399 (LMVL…PVAM), 413–433 (VLTG…AGVI), and 458–478 (VFEQ…LIWL).

The protein belongs to the major facilitator superfamily. Proton-dependent oligopeptide transporter (POT/PTR) (TC 2.A.17) family. DtpD subfamily.

It is found in the cell inner membrane. Functionally, probable proton-dependent permease that transports dipeptides. This is Dipeptide permease D from Salmonella paratyphi C (strain RKS4594).